Here is a 498-residue protein sequence, read N- to C-terminus: Probable FAD-binding monooxygenase AlmA (498 aa).

The helical transmembrane segment at 4–24 (HIDILIVGAGISGIGIAAHLS) threads the bilayer. Residues Ser15, Glu36, Asp56, Phe62, and Val104 each contribute to the FAD site. Residue 54–56 (RSD) coordinates NADP(+). NADP(+) contacts are provided by residues 184-190 (SGATAIT), 208-209 (RS), and 292-293 (RL). Val395 contacts FAD.

The protein belongs to the FAD-binding monooxygenase family. FAD is required as a cofactor.

Its subcellular location is the cell membrane. The protein operates within hydrocarbon metabolism; alkane degradation. In terms of biological role, is able to catalyze the degradation of n-alkanes with C chain lengths of 32 and 36. Probably allows Acinetobacter baylyi strain ADP1 to grow on the long-chain n-alkane dotriacontane (C32H66) as a sole carbon source. The polypeptide is Probable FAD-binding monooxygenase AlmA (Acinetobacter baylyi (strain ATCC 33305 / BD413 / ADP1)).